The following is a 112-amino-acid chain: Protein ECM19 (112 aa).

A helical transmembrane segment spans residues 35-57 (NTLDMVTIGIACLVGVYTGTRFF). A disordered region spans residues 82–112 (EDGNLLKVTPSLSSTPAAPPTPPTPPTPPQQ). Over residues 98 to 112 (AAPPTPPTPPTPPQQ) the composition is skewed to pro residues.

Its subcellular location is the mitochondrion membrane. Functionally, may be involved in cell wall organization and biogenesis. In Saccharomyces cerevisiae (strain ATCC 204508 / S288c) (Baker's yeast), this protein is Protein ECM19 (ECM19).